The chain runs to 191 residues: MPGSAPLILASASPRRLELLAQIGIVPDRVAPTDIDETRRKAESPRELALRLAREKAAACDAEGAFVLAADTVVALGQRNLEKAADETEAADFLRLLSGRAHQCITGVAVRAPSGQIVSRAVLARVKMKRLTEAEIAAYVASGDWKGKAGGYGIQGAAGGFVTAINGSYTAIVGLPLYETKSLLEGLGYRR.

Asp-71 acts as the Proton acceptor in catalysis.

Belongs to the Maf family. YhdE subfamily. A divalent metal cation serves as cofactor.

The protein resides in the cytoplasm. It carries out the reaction dTTP + H2O = dTMP + diphosphate + H(+). The enzyme catalyses UTP + H2O = UMP + diphosphate + H(+). Functionally, nucleoside triphosphate pyrophosphatase that hydrolyzes dTTP and UTP. May have a dual role in cell division arrest and in preventing the incorporation of modified nucleotides into cellular nucleic acids. The chain is dTTP/UTP pyrophosphatase from Hyphomonas neptunium (strain ATCC 15444).